A 483-amino-acid chain; its full sequence is ATP synthase subunit beta (483 aa).

Residue 162–169 (GGAGVGKT) participates in ATP binding.

Belongs to the ATPase alpha/beta chains family. In terms of assembly, F-type ATPases have 2 components, CF(1) - the catalytic core - and CF(0) - the membrane proton channel. CF(1) has five subunits: alpha(3), beta(3), gamma(1), delta(1), epsilon(1). CF(0) has four main subunits: a(1), b(1), b'(1) and c(9-12).

The protein localises to the cellular thylakoid membrane. It carries out the reaction ATP + H2O + 4 H(+)(in) = ADP + phosphate + 5 H(+)(out). Produces ATP from ADP in the presence of a proton gradient across the membrane. The catalytic sites are hosted primarily by the beta subunits. This Prochloron didemni protein is ATP synthase subunit beta.